We begin with the raw amino-acid sequence, 250 residues long: 4-hydroxy-tetrahydrodipicolinate reductase (250 aa).

NAD(+)-binding positions include 10–15 (GARGRI), 78–80 (GTT), and 105–108 (APNF). Catalysis depends on histidine 135, which acts as the Proton donor/acceptor. Histidine 136 lines the (S)-2,3,4,5-tetrahydrodipicolinate pocket. The Proton donor role is filled by lysine 139. 145-146 (GT) lines the (S)-2,3,4,5-tetrahydrodipicolinate pocket. The segment at 158 to 177 (RAEAGSAPQPDATTTALDGA) is disordered.

Belongs to the DapB family.

The protein resides in the cytoplasm. The catalysed reaction is (S)-2,3,4,5-tetrahydrodipicolinate + NAD(+) + H2O = (2S,4S)-4-hydroxy-2,3,4,5-tetrahydrodipicolinate + NADH + H(+). It carries out the reaction (S)-2,3,4,5-tetrahydrodipicolinate + NADP(+) + H2O = (2S,4S)-4-hydroxy-2,3,4,5-tetrahydrodipicolinate + NADPH + H(+). It participates in amino-acid biosynthesis; L-lysine biosynthesis via DAP pathway; (S)-tetrahydrodipicolinate from L-aspartate: step 4/4. Its function is as follows. Catalyzes the conversion of 4-hydroxy-tetrahydrodipicolinate (HTPA) to tetrahydrodipicolinate. This chain is 4-hydroxy-tetrahydrodipicolinate reductase, found in Streptomyces griseus subsp. griseus (strain JCM 4626 / CBS 651.72 / NBRC 13350 / KCC S-0626 / ISP 5235).